The chain runs to 778 residues: Serine/threonine-protein kinase BRSK1 (778 aa).

Residues 1–12 show a composition bias toward gly residues; sequence MSSGSKEGGGGS. Residues 1–29 form a disordered region; that stretch reads MSSGSKEGGGGSPAYHLPHPHPHPPQHAQ. Residues 34 to 285 enclose the Protein kinase domain; sequence YRLEKTLGKG…LEQIQKHPWY (252 aa). Residues 40–48 and lysine 63 each bind ATP; that span reads LGKGQTGLV. Aspartate 156 functions as the Proton acceptor in the catalytic mechanism. Threonine 189 bears the Phosphothreonine; by LKB1 mark. The residue at position 193 (serine 193) is a Phosphoserine. A UBA domain is found at 314-356; that stretch reads ELDPDVLESMASLGCFRDRERLHRELRSEEENQEKMIYYLLLD. The span at 362 to 383 shows a compositional bias: basic and acidic residues; it reads PSCEDQDLPPRNDVDPPRKRVD. The tract at residues 362–548 is disordered; sequence PSCEDQDLPP…SPGGGVGGAA (187 aa). 4 positions are modified to phosphoserine: serine 399, serine 443, serine 447, and serine 450. The span at 430-457 shows a compositional bias: low complexity; it reads SRSVSGASTGLSSSPLSSPRSPVFSFSP. An omega-N-methylarginine mark is found at arginine 466, arginine 481, arginine 484, and arginine 498. Pro residues predominate over residues 491–508; it reads QPPPPSARSTPLPGPPGS. Serine 508 is subject to Phosphoserine. A compositionally biased stretch (low complexity) spans 509–533; it reads PRSSGGTPLHSPLHTPRASPTGTPG. Arginine 525 bears the Omega-N-methylarginine mark. Residues threonine 529 and threonine 535 each carry the phosphothreonine modification. Arginine 550 is modified (omega-N-methylarginine). At threonine 583 the chain carries Phosphothreonine. A phosphoserine mark is found at serine 586, serine 587, and serine 601. A disordered region spans residues 719–778; it reads QPSVQALADEKNGAQTRPAGTPPRSLQPPPGRPDPDLSSSPRRGPSKDKKLLATNGTPLP.

Belongs to the protein kinase superfamily. CAMK Ser/Thr protein kinase family. SNF1 subfamily. The cofactor is Mg(2+). Post-translationally, phosphorylated at Thr-189 by STK11/LKB1 in complex with STE20-related adapter-alpha (STRADA) pseudo kinase and CAB39. Not phosphorylated at Thr-189 by CaMKK2. In contrast, it is phosphorylated and activated by CaMKK1. May be inactivated via dephosphorylation of Thr-189 by PP2C. May be autophosphorylated. In terms of tissue distribution, mainly present in brain. Present in presynaptic nerve terminals (at protein level).

It localises to the cytoplasm. Its subcellular location is the nucleus. The protein localises to the cytoskeleton. The protein resides in the microtubule organizing center. It is found in the centrosome. It localises to the synapse. Its subcellular location is the presynaptic active zone. The protein localises to the cytoplasmic vesicle. The protein resides in the secretory vesicle. It is found in the synaptic vesicle. It catalyses the reaction L-seryl-[protein] + ATP = O-phospho-L-seryl-[protein] + ADP + H(+). The enzyme catalyses L-threonyl-[protein] + ATP = O-phospho-L-threonyl-[protein] + ADP + H(+). It carries out the reaction L-seryl-[tau protein] + ATP = O-phospho-L-seryl-[tau protein] + ADP + H(+). The catalysed reaction is L-threonyl-[tau protein] + ATP = O-phospho-L-threonyl-[tau protein] + ADP + H(+). Its activity is regulated as follows. Activated by phosphorylation on Thr-189 by STK11/LKB1. Functionally, serine/threonine-protein kinase that plays a key role in polarization of neurons and centrosome duplication. Phosphorylates CDC25B, CDC25C, MAPT/TAU, RIMS1, TUBG1, TUBG2 and WEE1. Following phosphorylation and activation by STK11/LKB1, acts as a key regulator of polarization of cortical neurons, probably by mediating phosphorylation of microtubule-associated proteins such as MAPT/TAU at 'Thr-523' and 'Ser-573'. Also regulates neuron polarization by mediating phosphorylation of WEE1 at 'Ser-642' in postmitotic neurons, leading to down-regulate WEE1 activity in polarized neurons. Also acts as a positive regulator of centrosome duplication by mediating phosphorylation of gamma-tubulin (TUBG1 and TUBG2) at 'Ser-131', leading to translocation of gamma-tubulin and its associated proteins to the centrosome. Involved in the UV-induced DNA damage checkpoint response, probably by inhibiting CDK1 activity through phosphorylation and activation of WEE1, and inhibition of CDC25B and CDC25C. In neurons, localizes to synaptic vesicles and plays a role in neurotransmitter release, possibly by phosphorylating RIMS1. The sequence is that of Serine/threonine-protein kinase BRSK1 (Brsk1) from Rattus norvegicus (Rat).